The primary structure comprises 644 residues: SPbeta prophage-derived uncharacterized protein YomE (644 aa).

The sequence is that of SPbeta prophage-derived uncharacterized protein YomE (yomE) from Bacillus subtilis (strain 168).